Consider the following 566-residue polypeptide: ATP-binding protein SyrD (566 aa).

Positions 22–301 (HPWLTFFTLL…LVSAMPMLAQ (280 aa)) constitute an ABC transmembrane type-1 domain. Transmembrane regions (helical) follow at residues 24 to 44 (WLTFFTLLTGLISGVASIAVV), 61 to 81 (LFWFVGLSVVALLFRNGASLF), 132 to 152 (LLIMPTILVESAVFLFGIAYL), 158 to 178 (VVFAITISLMILGVAMYLLFF), 250 to 270 (QLTLSLLVGCLLFAAPMFAVI), and 279 to 299 (VLAVLYIMGPLVMLVSAMPML). In terms of domain architecture, ABC transporter spans 343–566 (IQLKNVHMNY…VKCAVEGKRA (224 aa)). Position 380–387 (380–387 (GGNGCGKS)) interacts with ATP.

The protein belongs to the ABC transporter superfamily. As to quaternary structure, dimer.

The protein resides in the cell inner membrane. Its function is as follows. ATP-driven efflux pump necessary for the secretion of syringomycin. May specifically bind syringomycin and translocate it to the periplasmic space. SyrD is also required for full expression of the syrB gene. The sequence is that of ATP-binding protein SyrD (syrD) from Pseudomonas syringae pv. syringae.